A 239-amino-acid chain; its full sequence is Ribonuclease PH (239 aa).

Residues Arg86 and 124–126 each bind phosphate; that span reads GTR.

The protein belongs to the RNase PH family. As to quaternary structure, homohexameric ring arranged as a trimer of dimers.

The enzyme catalyses tRNA(n+1) + phosphate = tRNA(n) + a ribonucleoside 5'-diphosphate. Its function is as follows. Phosphorolytic 3'-5' exoribonuclease that plays an important role in tRNA 3'-end maturation. Removes nucleotide residues following the 3'-CCA terminus of tRNAs; can also add nucleotides to the ends of RNA molecules by using nucleoside diphosphates as substrates, but this may not be physiologically important. Probably plays a role in initiation of 16S rRNA degradation (leading to ribosome degradation) during starvation. The sequence is that of Ribonuclease PH from Rickettsia africae (strain ESF-5).